We begin with the raw amino-acid sequence, 197 residues long: Nucleoside triphosphate pyrophosphatase (197 aa).

D72 acts as the Proton acceptor in catalysis.

The protein belongs to the Maf family. The cofactor is a divalent metal cation.

The protein localises to the cytoplasm. It carries out the reaction a ribonucleoside 5'-triphosphate + H2O = a ribonucleoside 5'-phosphate + diphosphate + H(+). It catalyses the reaction a 2'-deoxyribonucleoside 5'-triphosphate + H2O = a 2'-deoxyribonucleoside 5'-phosphate + diphosphate + H(+). In terms of biological role, nucleoside triphosphate pyrophosphatase. May have a dual role in cell division arrest and in preventing the incorporation of modified nucleotides into cellular nucleic acids. The polypeptide is Nucleoside triphosphate pyrophosphatase (Corynebacterium glutamicum (strain R)).